The chain runs to 488 residues: UDP-N-acetylmuramate--L-alanine ligase (488 aa).

Position 127 to 133 (127 to 133 (GTHGKTT)) interacts with ATP.

The protein belongs to the MurCDEF family.

It localises to the cytoplasm. It catalyses the reaction UDP-N-acetyl-alpha-D-muramate + L-alanine + ATP = UDP-N-acetyl-alpha-D-muramoyl-L-alanine + ADP + phosphate + H(+). It participates in cell wall biogenesis; peptidoglycan biosynthesis. In terms of biological role, cell wall formation. This Shewanella putrefaciens (strain CN-32 / ATCC BAA-453) protein is UDP-N-acetylmuramate--L-alanine ligase.